Reading from the N-terminus, the 101-residue chain is Protein S100-A4 (101 aa).

Ala-2 is subject to N-acetylalanine. Position 7 is an N6-acetyllysine (Lys-7). 2 EF-hand domains span residues 13-48 (VSTFHKYSGKEGDKFKLNKSELKELLTRELPSFLGK) and 50-85 (TDETAFQKLMSNLDCNKDNEVDFQEYCVFLSCIAMM). The Ca(2+) site is built by Lys-28 and Glu-33. Lys-35 is subject to N6-acetyllysine. Residues Asp-63, Asn-65, Asp-67, Glu-69, and Glu-74 each contribute to the Ca(2+) site.

The protein belongs to the S-100 family. Homodimer. Interacts with PPFIBP1 in a calcium-dependent mode. Interacts with PGLYRP1; this complex acts as a chemoattractant that promotes lymphocyte movement. Interacts with MYH9; this interaction increases cell motility. Interacts with Annexin 2/ANXA2. Interacts with TP53; this interaction promotes TP53 degradation. Interacts with CCR5 and CXCR3. Interacts with FCGR3A; this interaction inhibits PKC-dependent phosphorylation of FCGR3A.

The protein localises to the secreted. The protein resides in the nucleus. It is found in the cytoplasm. Functionally, calcium-binding protein that plays a role in various cellular processes including motility, angiogenesis, cell differentiation, apoptosis, and autophagy. Increases cell motility and invasiveness by interacting with non-muscle myosin heavy chain (NMMHC) IIA/MYH9. Mechanistically, promotes filament depolymerization and increases the amount of soluble myosin-IIA, resulting in the formation of stable protrusions facilitating chemotaxis. Also modulates the pro-apoptotic function of TP53 by binding to its C-terminal transactivation domain within the nucleus and reducing its protein levels. Within the extracellular space, stimulates cytokine production including granulocyte colony-stimulating factor and CCL24 from T-lymphocytes. In addition, stimulates T-lymphocyte chemotaxis by acting as a chemoattractant complex with PGLYRP1 that promotes lymphocyte migration via CCR5 and CXCR3 receptors. In Bos taurus (Bovine), this protein is Protein S100-A4 (S100A4).